We begin with the raw amino-acid sequence, 114 residues long: Beta-microseminoprotein E1 (114 aa).

An N-terminal signal peptide occupies residues 1–20 (MNVLLGGLVIFATFVTLCNG). Cystine bridges form between Cys-22/Cys-70, Cys-38/Cys-62, Cys-57/Cys-93, Cys-60/Cys-69, and Cys-84/Cys-107.

It belongs to the beta-microseminoprotein family.

The protein localises to the secreted. The chain is Beta-microseminoprotein E1 (MSPE) from Saguinus oedipus (Cotton-top tamarin).